Reading from the N-terminus, the 137-residue chain is Small ribosomal subunit protein uS9c (137 aa).

This sequence belongs to the universal ribosomal protein uS9 family.

Its subcellular location is the plastid. The protein localises to the chloroplast. This chain is Small ribosomal subunit protein uS9c (rps9), found in Mesostigma viride (Green alga).